Here is a 225-residue protein sequence, read N- to C-terminus: GTP-binding nuclear protein Ran (225 aa).

The Small GTPase Ran-type domain occupies 8–172 (VVAEFKLVLV…LWILRKLTGD (165 aa)). 19–26 (DGGVGKTT) contacts GTP. Positions 38–46 (KRYIATQGV) are switch-I. GTP contacts are provided by residues Gly-69, 123–126 (NKVD), and 151–153 (SAK). The segment at 69-85 (GQEKLGGLREGYYIGAN) is switch-II.

The protein belongs to the small GTPase superfamily. Ran family. As to quaternary structure, monomer. Found in a nuclear export complex with RanGTP, exportin and pre-miRNA.

It localises to the nucleus. Its function is as follows. GTP-binding protein involved in nucleocytoplasmic transport. Required for the import of protein into the nucleus and also for RNA export. Involved in chromatin condensation and control of cell cycle. This Tetrahymena thermophila protein is GTP-binding nuclear protein Ran.